The following is a 404-amino-acid chain: Pre-heme d1 synthase (404 aa).

Residues 22 to 235 (GTPKPVVIWN…LIARALESAE (214 aa)) form the Radical SAM core domain. Residues C36, C40, C43, C340, C343, C349, and C371 each contribute to the [4Fe-4S] cluster site.

Belongs to the radical SAM superfamily. [4Fe-4S] cluster is required as a cofactor.

Its pathway is porphyrin-containing compound metabolism. Involved in heme d1 biosynthesis. Radical SAM enzyme that catalyzes the removal of two propionate side chains from the intermediate 12,18-didecarboxysiroheme (DDSH) and may introduce the keto functions on rings A and B, yielding the heme d1 precursor dihydro-heme d1. This Dinoroseobacter shibae (strain DSM 16493 / NCIMB 14021 / DFL 12) protein is Pre-heme d1 synthase.